A 961-amino-acid polypeptide reads, in one-letter code: Ras-interacting protein 1 (961 aa).

Over residues 1-10 (MLSGERKEGG) the composition is skewed to basic and acidic residues. 3 disordered regions span residues 1–21 (MLSGERKEGGSPRFGKLHLPV), 35–70 (LGRRWPSAASVKSSSSDTGSRSSEPLPPPPPPPHVE), and 96–116 (RGSGAGGAGGPGTPGGAQRWA). The span at 41-57 (SAASVKSSSSDTGSRSS) shows a compositional bias: low complexity. Over residues 59–68 (PLPPPPPPPH) the composition is skewed to pro residues. Residue Arg96 is modified to Omega-N-methylarginine. Positions 98 to 110 (SGAGGAGGPGTPG) are enriched in gly residues. Residues 141 to 253 (PPGVLKIFAS…RRFELRGREE (113 aa)) form the Ras-associating domain. The interval 261-352 (AFGAADADGT…MAPGAADAQM (92 aa)) is disordered. Phosphoserine is present on residues Ser274 and Ser286. A compositionally biased stretch (low complexity) spans 284–295 (AASGGAALASPG). The segment covering 296–307 (PGSGSGTPTGSG) has biased composition (gly residues). The span at 314–327 (NLSLRRSVSELSLQ) shows a compositional bias: low complexity. A phosphoserine mark is found at Ser320, Ser322, Ser325, and Ser413. Positions 594–895 (GRLARLIKEA…PPAERDAVDT (302 aa)) constitute a Dilute domain.

Interacts with Ras family members that have been activated by GTP binding. Interacts with HRAS, RAP1A, RAP2, RRAS, RAF1 and RRAS2. Interacts with MYH9 and ARHGAP29. As to expression, detected in kidney, heart, skeletal muscle, small intestine and lung.

The protein resides in the cytoplasm. It is found in the perinuclear region. Its subcellular location is the golgi apparatus. The protein localises to the golgi stack. In terms of biological role, required for the proper formation of vascular structures that develop via both vasculogenesis and angiogenesis. Acts as a critical and vascular-specific regulator of GTPase signaling, cell architecture, and adhesion, which is essential for endothelial cell morphogenesis and blood vessel tubulogenesis. Regulates the activity of Rho GTPases in part by recruiting ARHGAP29 and suppressing RhoA signaling and dampening ROCK and MYH9 activities in endothelial cells. May act as effector for Golgi-bound HRAS and other Ras-like proteins. May promote HRAS-mediated transformation. Negative regulator of amino acid starvation-induced autophagy. In Mus musculus (Mouse), this protein is Ras-interacting protein 1 (Rasip1).